The chain runs to 1446 residues: Centrosomal protein of 164 kDa (1446 aa).

The interaction with ATRIP stretch occupies residues 1–195; sequence MARRPILLGD…PPQGLKAAAC (195 aa). Residues 56-89 enclose the WW domain; sequence APLPKGWKPCQNITGDLYYFNFDTGQSIWDHPCD. 2 disordered regions span residues 106 to 132 and 159 to 185; these read PGAIKKKDKKKKKEKKNKKDKETSKSP and PPSALRGSQSVSLGSSADSGHLGEPTL. A compositionally biased stretch (basic residues) spans 109-121; it reads IKKKDKKKKKEKK. Polar residues predominate over residues 164–176; the sequence is RGSQSVSLGSSAD. S202 is modified (phosphoserine). Disordered regions lie at residues 217–238, 250–408, 424–570, and 830–849; these read EETNEEDEEESDNQSVRSSSEL, GGNF…SFLG, GDTL…EPAA, and KRQEVEREHERKMDKMKEEH. Over residues 218–228 the composition is skewed to acidic residues; that stretch reads ETNEEDEEESD. Residues 257–277 are compositionally biased toward basic and acidic residues; it reads ESPRTSQPDKKDVSLDSDADR. The span at 288–312 shows a compositional bias: polar residues; it reads GADSSVASANGSKSQGRGASPWNPQ. Composition is skewed to basic and acidic residues over residues 355–372 and 384–397; these read KEGECRRESAAKEPKEAS and SEIHGHLKDARHSG. A compositionally biased stretch (polar residues) spans 451 to 461; the sequence is SSIAEPQSKHT. Composition is skewed to basic and acidic residues over residues 490-499 and 525-534; these read PEWKEAEGPG and ERAEEKHSQA. Residues 1143–1197 are a coiled coil; the sequence is EVLGNMRKNLNEETRHLDEMKSAMRKGHDLLKKKEEKLIQLESSLQEEVSDEDTL. Residues 1261–1287 form a disordered region; the sequence is LGSLNSQPPPQGLGSQPPPPLFTSSLR. The segment covering 1267-1281 has biased composition (pro residues); sequence QPPPQGLGSQPPPPL. Phosphoserine occurs at positions 1369 and 1371.

Interacts (via N-terminus) with ATRIP. Interacts with ATM, ATR and MDC1. Interacts with XPA (via N-terminus) upon UV irradiation. Interacts with CEP83, CCDC92, TTBK2, DVL3, NPHP3 and weakly with NPHP4. Interacts with DZIP1.

It is found in the cytoplasm. It localises to the cytoskeleton. Its subcellular location is the microtubule organizing center. The protein localises to the centrosome. The protein resides in the centriole. It is found in the nucleus. In terms of biological role, plays a role in microtubule organization and/or maintenance for the formation of primary cilia (PC), a microtubule-based structure that protrudes from the surface of epithelial cells. Plays a critical role in G2/M checkpoint and nuclear divisions. A key player in the DNA damage-activated ATR/ATM signaling cascade since it is required for the proper phosphorylation of H2AX, RPA, CHEK2 and CHEK1. Plays a critical role in chromosome segregation, acting as a mediator required for the maintenance of genomic stability through modulation of MDC1, RPA and CHEK1. This is Centrosomal protein of 164 kDa from Mus musculus (Mouse).